A 149-amino-acid polypeptide reads, in one-letter code: Calmodulin (149 aa).

EF-hand domains lie at 8 to 43 (QQIA…LGQN), 44 to 79 (PSES…KMKD), 81 to 116 (DSEA…IGEK), and 117 to 149 (LSDA…LAAK). 20 residues coordinate Ca(2+): Asp21, Asp23, Asp25, Lys27, Glu32, Asp57, Asn59, Asp61, Ser63, Glu68, Asp94, Asn96, Asp98, Lys100, Glu105, Asp130, Asn132, Asp134, Glu136, and Glu141.

Belongs to the calmodulin family.

In terms of biological role, calmodulin mediates the control of a large number of enzymes, ion channels and other proteins by Ca(2+). Among the enzymes to be stimulated by the calmodulin-Ca(2+) complex are a number of protein kinases and phosphatases. The protein is Calmodulin (CMD1) of Candida albicans (Yeast).